Reading from the N-terminus, the 100-residue chain is Large ribosomal subunit protein eL31 (100 aa).

Belongs to the eukaryotic ribosomal protein eL31 family.

The polypeptide is Large ribosomal subunit protein eL31 (Hyperthermus butylicus (strain DSM 5456 / JCM 9403 / PLM1-5)).